A 430-amino-acid chain; its full sequence is Enolase (430 aa).

Position 163 (Gln163) interacts with (2R)-2-phosphoglycerate. Glu205 serves as the catalytic Proton donor. Mg(2+) contacts are provided by Asp242, Glu287, and Asp314. Residues Lys339, Arg368, Ser369, and Lys390 each contribute to the (2R)-2-phosphoglycerate site. Lys339 functions as the Proton acceptor in the catalytic mechanism.

This sequence belongs to the enolase family. Mg(2+) is required as a cofactor.

It is found in the cytoplasm. The protein resides in the secreted. The protein localises to the cell surface. The enzyme catalyses (2R)-2-phosphoglycerate = phosphoenolpyruvate + H2O. Its pathway is carbohydrate degradation; glycolysis; pyruvate from D-glyceraldehyde 3-phosphate: step 4/5. Functionally, catalyzes the reversible conversion of 2-phosphoglycerate (2-PG) into phosphoenolpyruvate (PEP). It is essential for the degradation of carbohydrates via glycolysis. This is Enolase from Listeria innocua serovar 6a (strain ATCC BAA-680 / CLIP 11262).